A 139-amino-acid polypeptide reads, in one-letter code: Nucleoside diphosphate kinase (139 aa).

The ATP site is built by K9, F57, R85, T91, R102, and N112. H115 serves as the catalytic Pros-phosphohistidine intermediate.

This sequence belongs to the NDK family. In terms of assembly, homotetramer. Requires Mg(2+) as cofactor.

The protein resides in the cytoplasm. It carries out the reaction a 2'-deoxyribonucleoside 5'-diphosphate + ATP = a 2'-deoxyribonucleoside 5'-triphosphate + ADP. The enzyme catalyses a ribonucleoside 5'-diphosphate + ATP = a ribonucleoside 5'-triphosphate + ADP. Functionally, major role in the synthesis of nucleoside triphosphates other than ATP. The ATP gamma phosphate is transferred to the NDP beta phosphate via a ping-pong mechanism, using a phosphorylated active-site intermediate. This is Nucleoside diphosphate kinase from Neorickettsia sennetsu (strain ATCC VR-367 / Miyayama) (Ehrlichia sennetsu).